The chain runs to 294 residues: ATP synthase gamma chain (294 aa).

This sequence belongs to the ATPase gamma chain family. As to quaternary structure, F-type ATPases have 2 components, CF(1) - the catalytic core - and CF(0) - the membrane proton channel. CF(1) has five subunits: alpha(3), beta(3), gamma(1), delta(1), epsilon(1). CF(0) has three main subunits: a, b and c.

Its subcellular location is the cell membrane. Its function is as follows. Produces ATP from ADP in the presence of a proton gradient across the membrane. The gamma chain is believed to be important in regulating ATPase activity and the flow of protons through the CF(0) complex. The sequence is that of ATP synthase gamma chain from Ruminiclostridium cellulolyticum (strain ATCC 35319 / DSM 5812 / JCM 6584 / H10) (Clostridium cellulolyticum).